A 375-amino-acid polypeptide reads, in one-letter code: MLVNNVFSLLCFPLLMSVVRCSTLSRQRRQFVFPDEEELCSNRFTEEGTCKNVLDCRILLQKNDYNLLKESICGFEGITPKVCCPKSSHVISSTQAPPETTTTERPPKQIPPNLPEVCGIHNTTTTRIIGGREAPIGAWPWMTAVYIKQGGIRSVQCGGALVTNRHVITASHCVVNSAGTDVMPADVFSVRLGEHNLYSTDDDSNPIDFAVTSVKHHEHFVLATYLNDIAILTLNDTVTFTDRIRPICLPYRKLRYDDLAMRKPFITGWGTTAFNGPSSAVLREVQLPIWEHEACRQAYEKDLNITNVYMCAGFADGGKDACQGDSGGPMMLPVKTGEFYLIGIVSFGKKCALPGFPGVYTKVTEFLDWIAEHMV.

The first 21 residues, 1–21, serve as a signal peptide directing secretion; that stretch reads MLVNNVFSLLCFPLLMSVVRC. A propeptide spanning residues 22–27 is cleaved from the precursor; it reads STLSRQ. Q30 is subject to Pyrrolidone carboxylic acid. Positions 39-84 constitute a Clip domain; that stretch reads LCSNRFTEEGTCKNVLDCRILLQKNDYNLLKESICGFEGITPKVCC. Disulfide bonds link C40–C83, C50–C73, and C56–C84. The disordered stretch occupies residues 90 to 113; the sequence is VISSTQAPPETTTTERPPKQIPPN. 4 cysteine pairs are disulfide-bonded: C118–C248, C157–C173, C295–C311, and C322–C351. Residue N122 is glycosylated (N-linked (GlcNAc...) asparagine). In terms of domain architecture, Peptidase S1 spans 128 to 375; sequence IIGGREAPIG…FLDWIAEHMV (248 aa). H172 serves as the catalytic Charge relay system. Ca(2+) contacts are provided by E194, N196, S199, and D202. The active-site Charge relay system is the D228. Residues N235 and N304 are each glycosylated (N-linked (GlcNAc...) asparagine). Residue S326 is the Charge relay system of the active site.

Belongs to the peptidase S1 family. CLIP subfamily. In the active form, heterodimer of a light chain and a heavy chain; disulfide-linked. Forms a covalent heterodimer with intracellular coagulation inhibitor 2/LICI-2. Post-translationally, proteolytically cleaved into its mature active form by serine protease factor B. Cleavage produces a 25 kDa light chain containing the CLIP domain and a catalytic 31 kDa heavy chain which remain covalently associated through an interchain disulfide bond. Proteolytically cleaved by clotting factor G subunit beta. Contains six O-linked carbohydrate chains in the N-terminal light chain. As to expression, expressed in hemocytes (at protein level).

It localises to the cytoplasmic vesicle. Its subcellular location is the secretory vesicle. It is found in the secreted. It catalyses the reaction Selective cleavage of 18-Arg-|- and 47-Arg-|- bonds in coagulogen to form coagulin and fragments.. Its activity is regulated as follows. Inhibited by intracellular coagulation inhibitor 2/LICI-2 and to a lesser extent by intracellular coagulation inhibitor 3/LICI-3. Functionally, this enzyme is closely associated with an endotoxin-sensitive hemolymph coagulation system in limulus. Its active form catalyzes the conversion of coagulogen to insoluble coagulin gel. The polypeptide is Proclotting enzyme (Tachypleus tridentatus (Japanese horseshoe crab)).